We begin with the raw amino-acid sequence, 287 residues long: Phosphatidylserine decarboxylase proenzyme (287 aa).

Catalysis depends on charge relay system; for autoendoproteolytic cleavage activity residues D90, H147, and S253. The active-site Schiff-base intermediate with substrate; via pyruvic acid; for decarboxylase activity is S253. S253 is modified (pyruvic acid (Ser); by autocatalysis).

Belongs to the phosphatidylserine decarboxylase family. PSD-B subfamily. Prokaryotic type I sub-subfamily. In terms of assembly, heterodimer of a large membrane-associated beta subunit and a small pyruvoyl-containing alpha subunit. Pyruvate serves as cofactor. Is synthesized initially as an inactive proenzyme. Formation of the active enzyme involves a self-maturation process in which the active site pyruvoyl group is generated from an internal serine residue via an autocatalytic post-translational modification. Two non-identical subunits are generated from the proenzyme in this reaction, and the pyruvate is formed at the N-terminus of the alpha chain, which is derived from the carboxyl end of the proenzyme. The autoendoproteolytic cleavage occurs by a canonical serine protease mechanism, in which the side chain hydroxyl group of the serine supplies its oxygen atom to form the C-terminus of the beta chain, while the remainder of the serine residue undergoes an oxidative deamination to produce ammonia and the pyruvoyl prosthetic group on the alpha chain. During this reaction, the Ser that is part of the protease active site of the proenzyme becomes the pyruvoyl prosthetic group, which constitutes an essential element of the active site of the mature decarboxylase.

Its subcellular location is the cell membrane. It carries out the reaction a 1,2-diacyl-sn-glycero-3-phospho-L-serine + H(+) = a 1,2-diacyl-sn-glycero-3-phosphoethanolamine + CO2. It functions in the pathway phospholipid metabolism; phosphatidylethanolamine biosynthesis; phosphatidylethanolamine from CDP-diacylglycerol: step 2/2. In terms of biological role, catalyzes the formation of phosphatidylethanolamine (PtdEtn) from phosphatidylserine (PtdSer). This Aliivibrio fischeri (strain ATCC 700601 / ES114) (Vibrio fischeri) protein is Phosphatidylserine decarboxylase proenzyme.